Consider the following 511-residue polypeptide: Cytochrome P450 89A9 (511 aa).

The chain crosses the membrane as a helical; Signal-anchor for type II membrane protein span at residues 6-26 (IIFLIISSLTFSIFLKLIFFF). Cys454 lines the heme pocket.

Belongs to the cytochrome P450 family. Heme is required as a cofactor.

It is found in the endoplasmic reticulum membrane. The catalysed reaction is primary fluorescent chlorophyll catabolite + reduced [NADPH--hemoprotein reductase] + O2 = primary fluorescent dioxobilin-type chlorophyll catabolite + formate + oxidized [NADPH--hemoprotein reductase] + 2 H(+). Its pathway is porphyrin-containing compound metabolism; chlorophyll degradation. In terms of biological role, involved in the chlorophyll breakdown by its action in nonpolar primary fluorescent chlorophyll catabolite (pFCC) decarbonylation. Involved in the formation of major chlorophyll breakdown products, including non-fluorescent dioxobilin-type chlorophyll catabolites (NDCCs), during leaf senescence. The protein is Cytochrome P450 89A9 of Arabidopsis thaliana (Mouse-ear cress).